Consider the following 392-residue polypeptide: Phosphoglycerate kinase (392 aa).

Substrate contacts are provided by residues 26-28 (DLN), Arg41, 64-67 (HLGR), Arg118, and Arg151. ATP contacts are provided by residues Lys202, Glu319, and 345–348 (GGDT).

It belongs to the phosphoglycerate kinase family. As to quaternary structure, monomer.

Its subcellular location is the cytoplasm. It catalyses the reaction (2R)-3-phosphoglycerate + ATP = (2R)-3-phospho-glyceroyl phosphate + ADP. It participates in carbohydrate degradation; glycolysis; pyruvate from D-glyceraldehyde 3-phosphate: step 2/5. This chain is Phosphoglycerate kinase, found in Photobacterium profundum (strain SS9).